The primary structure comprises 1203 residues: Chromosome partition protein Smc (1203 aa).

32 to 39 (PNGSGKSN) contacts ATP. Coiled coils occupy residues 167-203 (ILKYRRRKEKALRKLDAMSANLARLTDLTTELRRQLK), 250-288 (MMRRDHDEAAARLAVASEELAAHEAALTELSGRAESVQQ), and 327-497 (DVLE…LERK). The 112-residue stretch at 511–622 (GLLGSIAKLV…VVNYLAEALG (112 aa)) folds into the SMC hinge domain. 3 coiled-coil regions span residues 657–689 (EVTSEIDKAGAELAAAEAHMAQLNAALSGALSE), 720–765 (RLGQ…NVEQ), and 976–1030 (YDRA…RKDL).

This sequence belongs to the SMC family. In terms of assembly, homodimer.

The protein resides in the cytoplasm. Its function is as follows. Required for chromosome condensation and partitioning. The sequence is that of Chromosome partition protein Smc from Mycobacterium leprae (strain TN).